We begin with the raw amino-acid sequence, 518 residues long: Serine/threonine-protein kinase UL13 (518 aa).

Positions 1-119 are disordered; sequence MDESRRQRPA…QAALTAPPSS (119 aa). Positions 151 to 518 constitute a Protein kinase domain; it reads PGARSFGGSG…TNPCARHALS (368 aa). Residues 157 to 165 and Lys176 contribute to the ATP site; that span reads GGSGGYGDV. The active-site Proton acceptor is the Asp277.

It belongs to the protein kinase superfamily. Ser/Thr protein kinase family. Post-translationally, autophosphorylated.

The protein resides in the virion tegument. It is found in the host nucleus. The enzyme catalyses L-seryl-[protein] + ATP = O-phospho-L-seryl-[protein] + ADP + H(+). It catalyses the reaction L-threonyl-[protein] + ATP = O-phospho-L-threonyl-[protein] + ADP + H(+). Functionally, multifunctional serine/threonine kinase that plays a role in several processes including egress of virus particles from the nucleus, modulation of the actin cytoskeleton and regulation of viral and cellular gene expression. Regulates the nuclear localization of viral envelopment factors UL34 and UL31, by phosphorylating the US3 kinase, indicating a role in nuclear egress. Disrupts host nuclear lamins, including LMNA and LMNB1. Phosphorylates the viral Fc receptor composed of glycoproteins E (gE) and I (gI). Phosphorylation of glycoprotein E (gE) by UL13 alters its subcellular localization, from the host early endosome to the plasma membrane. Participates in the transcriptional regulation of cellular and viral mRNAs mainly by phosphorylating the viral transcriptional regulator ICP22. Additional substrates have been identified, including UL41, UL49 or host EF1D. The polypeptide is Serine/threonine-protein kinase UL13 (Homo sapiens (Human)).